The sequence spans 254 residues: 3-deoxy-manno-octulosonate cytidylyltransferase (254 aa).

The protein belongs to the KdsB family.

The protein localises to the cytoplasm. The enzyme catalyses 3-deoxy-alpha-D-manno-oct-2-ulosonate + CTP = CMP-3-deoxy-beta-D-manno-octulosonate + diphosphate. Its pathway is nucleotide-sugar biosynthesis; CMP-3-deoxy-D-manno-octulosonate biosynthesis; CMP-3-deoxy-D-manno-octulosonate from 3-deoxy-D-manno-octulosonate and CTP: step 1/1. The protein operates within bacterial outer membrane biogenesis; lipopolysaccharide biosynthesis. In terms of biological role, activates KDO (a required 8-carbon sugar) for incorporation into bacterial lipopolysaccharide in Gram-negative bacteria. The protein is 3-deoxy-manno-octulosonate cytidylyltransferase of Bordetella petrii (strain ATCC BAA-461 / DSM 12804 / CCUG 43448).